The primary structure comprises 211 residues: Protein-L-isoaspartate O-methyltransferase 2 (211 aa).

Serine 60 is an active-site residue.

This sequence belongs to the methyltransferase superfamily. L-isoaspartyl/D-aspartyl protein methyltransferase family.

The protein resides in the cytoplasm. The catalysed reaction is [protein]-L-isoaspartate + S-adenosyl-L-methionine = [protein]-L-isoaspartate alpha-methyl ester + S-adenosyl-L-homocysteine. In terms of biological role, catalyzes the methyl esterification of L-isoaspartyl residues in peptides and proteins that result from spontaneous decomposition of normal L-aspartyl and L-asparaginyl residues. It plays a role in the repair and/or degradation of damaged proteins. The chain is Protein-L-isoaspartate O-methyltransferase 2 from Nitrosospira multiformis (strain ATCC 25196 / NCIMB 11849 / C 71).